A 132-amino-acid polypeptide reads, in one-letter code: ATP synthase epsilon chain (132 aa).

It belongs to the ATPase epsilon chain family. F-type ATPases have 2 components, CF(1) - the catalytic core - and CF(0) - the membrane proton channel. CF(1) has five subunits: alpha(3), beta(3), gamma(1), delta(1), epsilon(1). CF(0) has three main subunits: a, b and c.

It localises to the cell membrane. Produces ATP from ADP in the presence of a proton gradient across the membrane. The protein is ATP synthase epsilon chain of Bacillus velezensis (strain DSM 23117 / BGSC 10A6 / LMG 26770 / FZB42) (Bacillus amyloliquefaciens subsp. plantarum).